Consider the following 452-residue polypeptide: Trigger factor (452 aa).

In terms of domain architecture, PPIase FKBP-type spans Gly171–Lys256.

It belongs to the FKBP-type PPIase family. Tig subfamily.

The protein localises to the cytoplasm. The enzyme catalyses [protein]-peptidylproline (omega=180) = [protein]-peptidylproline (omega=0). In terms of biological role, involved in protein export. Acts as a chaperone by maintaining the newly synthesized protein in an open conformation. Functions as a peptidyl-prolyl cis-trans isomerase. The chain is Trigger factor from Bradyrhizobium sp. (strain BTAi1 / ATCC BAA-1182).